The primary structure comprises 450 residues: Ribosomal protein uS12 methylthiotransferase RimO (450 aa).

The region spanning 7–123 (QKVSMVSLGC…IAEILAEKSG (117 aa)) is the MTTase N-terminal domain. [4Fe-4S] cluster is bound by residues Cys-16, Cys-52, Cys-86, Cys-161, Cys-165, and Cys-168. Positions 147–377 (SSPAWFSYLK…MRIQARLSFK (231 aa)) constitute a Radical SAM core domain. A TRAM domain is found at 380–448 (RELIGTTEQV…DYDLIGEIQE (69 aa)).

Belongs to the methylthiotransferase family. RimO subfamily. [4Fe-4S] cluster serves as cofactor.

It is found in the cytoplasm. The catalysed reaction is L-aspartate(89)-[ribosomal protein uS12]-hydrogen + (sulfur carrier)-SH + AH2 + 2 S-adenosyl-L-methionine = 3-methylsulfanyl-L-aspartate(89)-[ribosomal protein uS12]-hydrogen + (sulfur carrier)-H + 5'-deoxyadenosine + L-methionine + A + S-adenosyl-L-homocysteine + 2 H(+). In terms of biological role, catalyzes the methylthiolation of an aspartic acid residue of ribosomal protein uS12. In Pelobacter propionicus (strain DSM 2379 / NBRC 103807 / OttBd1), this protein is Ribosomal protein uS12 methylthiotransferase RimO.